The chain runs to 447 residues: Na(+)-translocating NADH-quinone reductase subunit A (447 aa).

It belongs to the NqrA family. Composed of six subunits; NqrA, NqrB, NqrC, NqrD, NqrE and NqrF.

It carries out the reaction a ubiquinone + n Na(+)(in) + NADH + H(+) = a ubiquinol + n Na(+)(out) + NAD(+). In terms of biological role, NQR complex catalyzes the reduction of ubiquinone-1 to ubiquinol by two successive reactions, coupled with the transport of Na(+) ions from the cytoplasm to the periplasm. NqrA to NqrE are probably involved in the second step, the conversion of ubisemiquinone to ubiquinol. The polypeptide is Na(+)-translocating NADH-quinone reductase subunit A (Neisseria gonorrhoeae (strain ATCC 700825 / FA 1090)).